Here is a 122-residue protein sequence, read N- to C-terminus: Guanine nucleotide exchange factor MSS4 homolog (122 aa).

The MSS4 domain maps to 9 to 120 (EQITDGKNKS…YLALKRVVHK (112 aa)). Zn(2+) contacts are provided by C22, C25, C92, and C95.

It belongs to the DSS4/MSS4 family. In terms of assembly, interacts with Rab8.

The protein resides in the basal cell membrane. Its function is as follows. Guanine-nucleotide-releasing protein that acts on members of the sec4/ypt1/rab subfamily such as Rab8. During egg development, essential for establishing and maintaining epithelial cell polarity by regulating the correct polarized deposition of basal membrane (BM) proteins such as trol/Pcan and vkg/Coll IV to the basal surface of follicular epithelial (FE) cells. Likely to function by restricting the activity of the vesicle transport regulator Rab8 to the basal membrane, and thus directs BM protein-containing vesicles to the basal side of the FE cells. This function is independent of the Crag/Rab10 regulation of polarized BM protein secretion in the FE. This chain is Guanine nucleotide exchange factor MSS4 homolog, found in Drosophila melanogaster (Fruit fly).